The primary structure comprises 345 residues: uncharacterized protein (345 aa).

Transmembrane regions (helical) follow at residues 23–43 (VVGF…YSYV) and 56–76 (FLIA…FVAL). A disordered region spans residues 326–345 (VTEPTTNSKRKPVKAKKAKK). A compositionally biased stretch (basic residues) spans 333–345 (SKRKPVKAKKAKK).

The protein resides in the cell membrane. This is an uncharacterized protein from Mycoplasma pneumoniae (strain ATCC 29342 / M129 / Subtype 1) (Mycoplasmoides pneumoniae).